The primary structure comprises 61 residues: Photosystem II reaction center protein K (61 aa).

Residues 1–24 (MPNIFSLICICLNSALQPSGFFFA) constitute a propeptide that is removed on maturation. A helical transmembrane segment spans residues 36–56 (IVDFMPVIPVLFFLLAFVWQA).

The protein belongs to the PsbK family. PSII is composed of 1 copy each of membrane proteins PsbA, PsbB, PsbC, PsbD, PsbE, PsbF, PsbH, PsbI, PsbJ, PsbK, PsbL, PsbM, PsbT, PsbX, PsbY, PsbZ, Psb30/Ycf12, at least 3 peripheral proteins of the oxygen-evolving complex and a large number of cofactors. It forms dimeric complexes.

The protein resides in the plastid. It localises to the chloroplast thylakoid membrane. In terms of biological role, one of the components of the core complex of photosystem II (PSII). PSII is a light-driven water:plastoquinone oxidoreductase that uses light energy to abstract electrons from H(2)O, generating O(2) and a proton gradient subsequently used for ATP formation. It consists of a core antenna complex that captures photons, and an electron transfer chain that converts photonic excitation into a charge separation. The sequence is that of Photosystem II reaction center protein K from Nymphaea alba (White water-lily).